A 482-amino-acid chain; its full sequence is D-inositol 3-phosphate glycosyltransferase (482 aa).

Histidine 63 contacts 1D-myo-inositol 3-phosphate. Residues 69–70 (QP) and glycine 77 each bind UDP-N-acetyl-alpha-D-glucosamine. 1D-myo-inositol 3-phosphate is bound by residues 74 to 79 (DAGGMN), lysine 132, tyrosine 165, threonine 189, and arginine 209. Residues arginine 289, lysine 294, and glutamine 355 each contribute to the UDP-N-acetyl-alpha-D-glucosamine site. Residues tyrosine 364, arginine 365, and alanine 367 each coordinate Mg(2+). 2 residues coordinate UDP-N-acetyl-alpha-D-glucosamine: glutamate 377 and glutamate 385. Threonine 391 lines the Mg(2+) pocket.

This sequence belongs to the glycosyltransferase group 1 family. MshA subfamily. As to quaternary structure, homodimer.

It carries out the reaction 1D-myo-inositol 3-phosphate + UDP-N-acetyl-alpha-D-glucosamine = 1D-myo-inositol 2-acetamido-2-deoxy-alpha-D-glucopyranoside 3-phosphate + UDP + H(+). Catalyzes the transfer of a N-acetyl-glucosamine moiety to 1D-myo-inositol 3-phosphate to produce 1D-myo-inositol 2-acetamido-2-deoxy-glucopyranoside 3-phosphate in the mycothiol biosynthesis pathway. This is D-inositol 3-phosphate glycosyltransferase from Salinispora tropica (strain ATCC BAA-916 / DSM 44818 / JCM 13857 / NBRC 105044 / CNB-440).